Reading from the N-terminus, the 261-residue chain is tRNA pseudouridine synthase A (261 aa).

The active-site Nucleophile is the Asp51. Residue Tyr109 coordinates substrate.

The protein belongs to the tRNA pseudouridine synthase TruA family. In terms of assembly, homodimer.

The enzyme catalyses uridine(38/39/40) in tRNA = pseudouridine(38/39/40) in tRNA. Its function is as follows. Formation of pseudouridine at positions 38, 39 and 40 in the anticodon stem and loop of transfer RNAs. This is tRNA pseudouridine synthase A from Shewanella sp. (strain ANA-3).